Here is a 119-residue protein sequence, read N- to C-terminus: Large ribosomal subunit protein bL20 (119 aa).

Belongs to the bacterial ribosomal protein bL20 family.

In terms of biological role, binds directly to 23S ribosomal RNA and is necessary for the in vitro assembly process of the 50S ribosomal subunit. It is not involved in the protein synthesizing functions of that subunit. In Gloeobacter violaceus (strain ATCC 29082 / PCC 7421), this protein is Large ribosomal subunit protein bL20.